The primary structure comprises 687 residues: Protein Smaug homolog 2 (687 aa).

The segment covering 160–172 has biased composition (basic and acidic residues); it reads TRPEPSYHSRQGS. The disordered stretch occupies residues 160-301; sequence TRPEPSYHSR…NTFQEDGSGM (142 aa). Serine 172 is modified (phosphoserine). Composition is skewed to low complexity over residues 175–190 and 200–211; these read WGGP…GPGW and HVPFHPSSSVPP. Over residues 215 to 224 the composition is skewed to polar residues; the sequence is SIGSNANTGL. Phosphoserine is present on residues serine 271, serine 278, serine 279, and serine 281. The span at 278-290 shows a compositional bias: low complexity; sequence SSGSEQTEEQGSS. An SAM domain is found at 299 to 372; sequence SGMKDVPSWL…LKSLEKDVLE (74 aa). Threonine 400 carries the post-translational modification Phosphothreonine. The segment at 402–464 is disordered; sequence TAKDEGRGEP…APAPVADGDI (63 aa). Positions 424-435 are enriched in basic and acidic residues; the sequence is GSDKGTEAKDPP. The segment covering 448 to 461 has biased composition (low complexity); that stretch reads PSDSSEPAPAPVAD. Residues serine 548, serine 550, serine 556, serine 585, and serine 593 each carry the phosphoserine modification. At arginine 595 the chain carries Asymmetric dimethylarginine. A disordered region spans residues 600 to 636; it reads SPSLGGQGRQNLWFANPGGSNSMPSQSRSSVQRTHSL. Positions 617–636 are enriched in polar residues; sequence GGSNSMPSQSRSSVQRTHSL. Serine 621 carries the phosphoserine modification.

Belongs to the SMAUG family.

It localises to the cytoplasm. The protein resides in the nucleus. Functionally, has transcriptional repressor activity. Overexpression inhibits the transcriptional activities of AP-1, p53/TP53 and CDKN1A. This Mus musculus (Mouse) protein is Protein Smaug homolog 2 (Samd4b).